The following is a 92-amino-acid chain: Small ribosomal subunit protein uS19c (92 aa).

It belongs to the universal ribosomal protein uS19 family.

The protein localises to the plastid. Its subcellular location is the chloroplast. Functionally, protein S19 forms a complex with S13 that binds strongly to the 16S ribosomal RNA. In Lactuca sativa (Garden lettuce), this protein is Small ribosomal subunit protein uS19c.